A 382-amino-acid chain; its full sequence is Galactokinase (382 aa).

Substrate is bound at residue 34-37; the sequence is EHTD. 124–130 is an ATP binding site; sequence GAGLSSS. Mg(2+) contacts are provided by Ser-130 and Glu-162. Catalysis depends on Asp-174, which acts as the Proton acceptor. Tyr-223 contributes to the substrate binding site.

Belongs to the GHMP kinase family. GalK subfamily.

It is found in the cytoplasm. It carries out the reaction alpha-D-galactose + ATP = alpha-D-galactose 1-phosphate + ADP + H(+). Its pathway is carbohydrate metabolism; galactose metabolism. Functionally, catalyzes the transfer of the gamma-phosphate of ATP to D-galactose to form alpha-D-galactose-1-phosphate (Gal-1-P). The chain is Galactokinase from Salmonella choleraesuis (strain SC-B67).